A 388-amino-acid polypeptide reads, in one-letter code: Nitric oxide reductase FlRd-NAD(+) reductase (388 aa).

This sequence belongs to the FAD-dependent oxidoreductase family. The cofactor is FAD.

It localises to the cytoplasm. It catalyses the reaction 2 reduced [nitric oxide reductase rubredoxin domain] + NAD(+) + H(+) = 2 oxidized [nitric oxide reductase rubredoxin domain] + NADH. It participates in nitrogen metabolism; nitric oxide reduction. Functionally, one of at least two accessory proteins for anaerobic nitric oxide (NO) reductase. Reduces the rubredoxin moiety of NO reductase. In Aeromonas hydrophila subsp. hydrophila (strain ATCC 7966 / DSM 30187 / BCRC 13018 / CCUG 14551 / JCM 1027 / KCTC 2358 / NCIMB 9240 / NCTC 8049), this protein is Nitric oxide reductase FlRd-NAD(+) reductase.